A 350-amino-acid chain; its full sequence is tRNA uridine(34) hydroxylase (350 aa).

The Rhodanese domain maps to 146–240 (DDPDALFIDM…YARKAREQGL (95 aa)). Cys-200 serves as the catalytic Cysteine persulfide intermediate.

It belongs to the TrhO family.

The enzyme catalyses uridine(34) in tRNA + AH2 + O2 = 5-hydroxyuridine(34) in tRNA + A + H2O. Catalyzes oxygen-dependent 5-hydroxyuridine (ho5U) modification at position 34 in tRNAs, the first step in 5-carboxymethoxyuridine (cmo5U) biosynthesis. May be part of an alternate pathway, which is able to bypass cmo5U biogenesis in a subset of tRNAs under aerobic conditions. The polypeptide is tRNA uridine(34) hydroxylase (Escherichia coli O127:H6 (strain E2348/69 / EPEC)).